Reading from the N-terminus, the 417-residue chain is NADH-quinone oxidoreductase subunit D (417 aa).

Belongs to the complex I 49 kDa subunit family. As to quaternary structure, NDH-1 is composed of 14 different subunits. Subunits NuoB, C, D, E, F, and G constitute the peripheral sector of the complex.

The protein localises to the cell inner membrane. It carries out the reaction a quinone + NADH + 5 H(+)(in) = a quinol + NAD(+) + 4 H(+)(out). In terms of biological role, NDH-1 shuttles electrons from NADH, via FMN and iron-sulfur (Fe-S) centers, to quinones in the respiratory chain. The immediate electron acceptor for the enzyme in this species is believed to be ubiquinone. Couples the redox reaction to proton translocation (for every two electrons transferred, four hydrogen ions are translocated across the cytoplasmic membrane), and thus conserves the redox energy in a proton gradient. The sequence is that of NADH-quinone oxidoreductase subunit D from Acidovorax sp. (strain JS42).